The primary structure comprises 159 residues: Thioredoxin O2, mitochondrial (159 aa).

The residue at position 40 (Ser40) is a Phosphoserine. The Thioredoxin domain maps to 43-159; it reads FAEGDRSSFV…LKSVMEQLYK (117 aa). Catalysis depends on nucleophile residues Cys83 and Cys86. A disulfide bond links Cys83 and Cys86.

It belongs to the thioredoxin family. Plant O-type subfamily.

The protein localises to the mitochondrion. Thiol-disulfide oxidoreductase that may participate in various redox reactions. Possesses insulin disulfide bonds reducing activity. Reduced by thioredoxin reductases NTRA and NTRB. The polypeptide is Thioredoxin O2, mitochondrial (Arabidopsis thaliana (Mouse-ear cress)).